Reading from the N-terminus, the 130-residue chain is Small ribosomal subunit protein uS11 (130 aa).

It belongs to the universal ribosomal protein uS11 family. As to quaternary structure, part of the 30S ribosomal subunit.

Its function is as follows. Located on the platform of the 30S subunit. The polypeptide is Small ribosomal subunit protein uS11 (Thermoplasma acidophilum (strain ATCC 25905 / DSM 1728 / JCM 9062 / NBRC 15155 / AMRC-C165)).